The following is a 125-amino-acid chain: Ribosome-binding factor A (125 aa).

This sequence belongs to the RbfA family. Monomer. Binds 30S ribosomal subunits, but not 50S ribosomal subunits or 70S ribosomes.

The protein localises to the cytoplasm. In terms of biological role, one of several proteins that assist in the late maturation steps of the functional core of the 30S ribosomal subunit. Associates with free 30S ribosomal subunits (but not with 30S subunits that are part of 70S ribosomes or polysomes). Required for efficient processing of 16S rRNA. May interact with the 5'-terminal helix region of 16S rRNA. The protein is Ribosome-binding factor A of Carboxydothermus hydrogenoformans (strain ATCC BAA-161 / DSM 6008 / Z-2901).